A 201-amino-acid polypeptide reads, in one-letter code: Retinol-binding protein 4 (201 aa).

The signal sequence occupies residues 1–18 (MEWVWALVVLAALGSAGA). Intrachain disulfides connect Cys22-Cys178, Cys88-Cys192, and Cys138-Cys147. Gln116 contributes to the substrate binding site. Arg139 bears the Omega-N-methylarginine mark.

Belongs to the calycin superfamily. Lipocalin family. As to quaternary structure, interacts with TTR. Interaction with TTR prevents its loss by filtration through the kidney glomeruli. Interacts with STRA6.

It is found in the secreted. Its function is as follows. Retinol-binding protein that mediates retinol transport in blood plasma. Delivers retinol from the liver stores to the peripheral tissues. Transfers the bound all-trans retinol to STRA6, that then facilitates retinol transport across the cell membrane. In Equus caballus (Horse), this protein is Retinol-binding protein 4 (RBP4).